Reading from the N-terminus, the 389-residue chain is PqqA peptide cyclase (389 aa).

The 216-residue stretch at 19 to 234 (VGLPLWLLAE…TNEYRDQLAA (216 aa)) folds into the Radical SAM core domain. Positions 33, 37, and 40 each coordinate [4Fe-4S] cluster.

This sequence belongs to the radical SAM superfamily. PqqE family. In terms of assembly, interacts with PqqD. The interaction is necessary for activity of PqqE. [4Fe-4S] cluster is required as a cofactor.

It catalyses the reaction [PQQ precursor protein] + S-adenosyl-L-methionine = E-Y cross-linked-[PQQ precursor protein] + 5'-deoxyadenosine + L-methionine + H(+). It participates in cofactor biosynthesis; pyrroloquinoline quinone biosynthesis. Functionally, catalyzes the cross-linking of a glutamate residue and a tyrosine residue in the PqqA protein as part of the biosynthesis of pyrroloquinoline quinone (PQQ). This Pseudomonas syringae pv. tomato (strain ATCC BAA-871 / DC3000) protein is PqqA peptide cyclase.